The chain runs to 301 residues: N-acetylmuramic acid 6-phosphate etherase (301 aa).

In terms of domain architecture, SIS spans 55-215; that stretch reads IADALRAGGR…STISMVALGK (161 aa). Glu83 acts as the Proton donor in catalysis. Glu111 is an active-site residue.

This sequence belongs to the GCKR-like family. MurNAc-6-P etherase subfamily. In terms of assembly, homodimer.

It carries out the reaction N-acetyl-D-muramate 6-phosphate + H2O = N-acetyl-D-glucosamine 6-phosphate + (R)-lactate. Its pathway is amino-sugar metabolism; 1,6-anhydro-N-acetylmuramate degradation. It functions in the pathway amino-sugar metabolism; N-acetylmuramate degradation. It participates in cell wall biogenesis; peptidoglycan recycling. Specifically catalyzes the cleavage of the D-lactyl ether substituent of MurNAc 6-phosphate, producing GlcNAc 6-phosphate and D-lactate. Together with AnmK, is also required for the utilization of anhydro-N-acetylmuramic acid (anhMurNAc) either imported from the medium or derived from its own cell wall murein, and thus plays a role in cell wall recycling. The protein is N-acetylmuramic acid 6-phosphate etherase of Burkholderia lata (strain ATCC 17760 / DSM 23089 / LMG 22485 / NCIMB 9086 / R18194 / 383).